The chain runs to 239 residues: UPF0173 metal-dependent hydrolase Msm_0779 (239 aa).

The protein belongs to the UPF0173 family.

This Methanobrevibacter smithii (strain ATCC 35061 / DSM 861 / OCM 144 / PS) protein is UPF0173 metal-dependent hydrolase Msm_0779.